A 626-amino-acid chain; its full sequence is Carnitine O-acetyltransferase (626 aa).

Lysine 93 is modified (N6-succinyllysine). An N6-acetyllysine; alternate modification is found at lysine 261. The residue at position 261 (lysine 261) is an N6-succinyllysine; alternate. Position 268 is an N6-acetyllysine (lysine 268). Histidine 343 acts as the Proton acceptor in catalysis. Residues lysine 419 and 423-430 (KSQKLSPD) each bind CoA. (R)-carnitine-binding residues include tyrosine 452 and serine 454. CoA is bound at residue serine 456. Threonine 465 lines the (R)-carnitine pocket. Residues arginine 504 and glutamine 555 each contribute to the CoA site. A Microbody targeting signal motif is present at residues 624–626 (AKL).

Belongs to the carnitine/choline acetyltransferase family. As to quaternary structure, monomer. As to expression, expressed in flagella of epididymal sperm.

It is found in the endoplasmic reticulum. The protein resides in the peroxisome. Its subcellular location is the mitochondrion inner membrane. The enzyme catalyses (R)-carnitine + acetyl-CoA = O-acetyl-(R)-carnitine + CoA. It carries out the reaction propanoyl-CoA + (R)-carnitine = O-propanoyl-(R)-carnitine + CoA. It catalyses the reaction butanoyl-CoA + (R)-carnitine = O-butanoyl-(R)-carnitine + CoA. The catalysed reaction is hexanoyl-CoA + (R)-carnitine = O-hexanoyl-(R)-carnitine + CoA. The enzyme catalyses octanoyl-CoA + (R)-carnitine = O-octanoyl-(R)-carnitine + CoA. It carries out the reaction decanoyl-CoA + (R)-carnitine = O-decanoyl-(R)-carnitine + CoA. It catalyses the reaction 3-methylbutanoyl-CoA + (R)-carnitine = O-3-methylbutanoyl-(R)-carnitine + CoA. The catalysed reaction is 2-methylpropanoyl-CoA + (R)-carnitine = O-isobutanoyl-(R)-carnitine + CoA. The enzyme catalyses 2-methylbutanoyl-CoA + (R)-carnitine = O-2-methylbutanoyl-(R)-carnitine + CoA. It carries out the reaction acetoacetyl-CoA + (R)-carnitine = O-3-oxobutanoyl-(R)-carnitine + CoA. It catalyses the reaction 3-hydroxybutanoyl-CoA + (R)-carnitine = O-3-hydroxybutanoyl-(R)-carnitine + CoA. The catalysed reaction is 4,8-dimethylnonanoyl-CoA + (R)-carnitine = O-4,8-dimethylnonanoyl-(R)-carnitine + CoA. The enzyme catalyses 2,6-dimethylheptanoyl-CoA + (R)-carnitine = O-2,6-dimethylheptanoyl-(R)-carnitine + CoA. Functionally, catalyzes the reversible transfer of acyl groups from carnitine to coenzyme A (CoA) and regulates the acyl-CoA/CoA ratio. Also plays a crucial role in the transport of fatty acids for beta-oxidation. Responsible for the synthesis of short- and branched-chain acylcarnitines. Active towards some branched-chain amino acid oxidation pathway (BCAAO) intermediates. Trans-2-enoyl-CoAs and 2-methylacyl-CoAs are poor substrates. This is Carnitine O-acetyltransferase from Rattus norvegicus (Rat).